A 465-amino-acid polypeptide reads, in one-letter code: Deoxyguanosinetriphosphate triphosphohydrolase-like protein (465 aa).

Positions 1–22 are disordered; sequence MKWDKLLNDKRRRESGVTRSKN. Residues 63–252 enclose the HD domain; it reads RLTHSMEVST…LEVADDIAYL (190 aa).

It belongs to the dGTPase family. Type 3 subfamily.

The chain is Deoxyguanosinetriphosphate triphosphohydrolase-like protein from Listeria monocytogenes serovar 1/2a (strain ATCC BAA-679 / EGD-e).